Here is a 533-residue protein sequence, read N- to C-terminus: Glucose-6-phosphate isomerase (533 aa).

The Proton donor role is filled by glutamate 341. Catalysis depends on residues histidine 372 and lysine 501.

The protein belongs to the GPI family.

The protein localises to the cytoplasm. It catalyses the reaction alpha-D-glucose 6-phosphate = beta-D-fructose 6-phosphate. It participates in carbohydrate biosynthesis; gluconeogenesis. Its pathway is carbohydrate degradation; glycolysis; D-glyceraldehyde 3-phosphate and glycerone phosphate from D-glucose: step 2/4. In terms of biological role, catalyzes the reversible isomerization of glucose-6-phosphate to fructose-6-phosphate. This is Glucose-6-phosphate isomerase from Cereibacter sphaeroides (strain ATCC 17025 / ATH 2.4.3) (Rhodobacter sphaeroides).